Reading from the N-terminus, the 496-residue chain is Glutamyl-tRNA(Gln) amidotransferase subunit A (496 aa).

Residues Lys75 and Ser150 each act as charge relay system in the active site. Ser174 serves as the catalytic Acyl-ester intermediate.

The protein belongs to the amidase family. GatA subfamily. Heterotrimer of A, B and C subunits.

It catalyses the reaction L-glutamyl-tRNA(Gln) + L-glutamine + ATP + H2O = L-glutaminyl-tRNA(Gln) + L-glutamate + ADP + phosphate + H(+). In terms of biological role, allows the formation of correctly charged Gln-tRNA(Gln) through the transamidation of misacylated Glu-tRNA(Gln) in organisms which lack glutaminyl-tRNA synthetase. The reaction takes place in the presence of glutamine and ATP through an activated gamma-phospho-Glu-tRNA(Gln). This chain is Glutamyl-tRNA(Gln) amidotransferase subunit A, found in Burkholderia lata (strain ATCC 17760 / DSM 23089 / LMG 22485 / NCIMB 9086 / R18194 / 383).